The following is a 299-amino-acid chain: Oxygen-dependent coproporphyrinogen-III oxidase (299 aa).

Ser-92 serves as a coordination point for substrate. Residues His-96 and His-106 each coordinate Mn(2+). His-106 acts as the Proton donor in catalysis. Substrate is bound at residue 108–110 (NVR). Residues His-145 and His-175 each coordinate Mn(2+). The interval 240-275 (YVEFNLVWDRGTLFGLQTGGRTESILMSMPPLVRWE) is important for dimerization. 258–260 (GGR) provides a ligand contact to substrate.

This sequence belongs to the aerobic coproporphyrinogen-III oxidase family. In terms of assembly, homodimer. Mn(2+) serves as cofactor.

The protein localises to the cytoplasm. It catalyses the reaction coproporphyrinogen III + O2 + 2 H(+) = protoporphyrinogen IX + 2 CO2 + 2 H2O. It participates in porphyrin-containing compound metabolism; protoporphyrin-IX biosynthesis; protoporphyrinogen-IX from coproporphyrinogen-III (O2 route): step 1/1. Functionally, involved in the heme biosynthesis. Catalyzes the aerobic oxidative decarboxylation of propionate groups of rings A and B of coproporphyrinogen-III to yield the vinyl groups in protoporphyrinogen-IX. This is Oxygen-dependent coproporphyrinogen-III oxidase from Escherichia coli O7:K1 (strain IAI39 / ExPEC).